Here is a 493-residue protein sequence, read N- to C-terminus: Probable fatty acyl-CoA reductase 4 (493 aa).

The protein belongs to the fatty acyl-CoA reductase family. As to expression, expressed in the endodermal cell layer surrounding the central vasculature in roots. Expressed in the hilum region of seeds. Expressed in stamen filaments and receptacle of siliques.

It carries out the reaction a long-chain fatty acyl-CoA + 2 NADPH + 2 H(+) = a long-chain primary fatty alcohol + 2 NADP(+) + CoA. Catalyzes the reduction of fatty acyl-CoA to fatty alcohols. Catalyzes specifically the formation of C18:0 and C20:0 fatty alcohols. Provides the fatty alcohols required for synthesis of suberin in roots, seed coat and wound-induced leaf tissue. Provides the fatty alcohols required for synthesis of alkyl hydroxycinnamates in root waxes. This Arabidopsis thaliana (Mouse-ear cress) protein is Probable fatty acyl-CoA reductase 4.